Reading from the N-terminus, the 168-residue chain is tRNA-splicing endonuclease (168 aa).

Catalysis depends on residues Y107, H114, and K145.

The protein belongs to the tRNA-intron endonuclease family. Archaeal short subfamily. Homotetramer; although the tetramer contains four active sites, only two participate in the cleavage. Therefore, it should be considered as a dimer of dimers.

The enzyme catalyses pretRNA = a 3'-half-tRNA molecule with a 5'-OH end + a 5'-half-tRNA molecule with a 2',3'-cyclic phosphate end + an intron with a 2',3'-cyclic phosphate and a 5'-hydroxyl terminus.. Functionally, endonuclease that removes tRNA introns. Cleaves pre-tRNA at the 5'- and 3'-splice sites to release the intron. The products are an intron and two tRNA half-molecules bearing 2',3' cyclic phosphate and 5'-OH termini. Recognizes a pseudosymmetric substrate in which 2 bulged loops of 3 bases are separated by a stem of 4 bp. This is tRNA-splicing endonuclease from Thermococcus gammatolerans (strain DSM 15229 / JCM 11827 / EJ3).